The following is a 149-amino-acid chain: Nucleoside diphosphate kinase (149 aa).

ATP contacts are provided by K9, F57, R85, T91, R102, and N112. The active-site Pros-phosphohistidine intermediate is the H115.

The protein belongs to the NDK family. The cofactor is Mg(2+).

The protein resides in the cytoplasm. It catalyses the reaction a 2'-deoxyribonucleoside 5'-diphosphate + ATP = a 2'-deoxyribonucleoside 5'-triphosphate + ADP. The catalysed reaction is a ribonucleoside 5'-diphosphate + ATP = a ribonucleoside 5'-triphosphate + ADP. Major role in the synthesis of nucleoside triphosphates other than ATP. The ATP gamma phosphate is transferred to the NDP beta phosphate via a ping-pong mechanism, using a phosphorylated active-site intermediate. This is Nucleoside diphosphate kinase from Methanosarcina barkeri (strain Fusaro / DSM 804).